The chain runs to 822 residues: BDNF/NT-3 growth factors receptor (822 aa).

The first 31 residues, 1–31, serve as a signal peptide directing secretion; sequence MSSWIRWHGPAMARLWGFCWLVVGFWRAAFA. Disulfide bonds link cysteine 32/cysteine 38 and cysteine 36/cysteine 45. The LRRNT domain occupies 32–61; sequence CPTSCKCSASRIWCSDPSPGIVAFPRLEPN. Residues 32 to 430 are Extracellular-facing; the sequence is CPTSCKCSAS…DVTDKTGREH (399 aa). Asparagine 67, asparagine 95, and asparagine 121 each carry an N-linked (GlcNAc...) asparagine glycan. LRR repeat units lie at residues 92–113 and 116–137; these read GLRN…AFLK and NLQH…HFRH. The region spanning 148–196 is the LRRCT domain; it reads NPFTCSCDIMWIKTLQEAKSSPDTQDLYCLNESSKNIPLANLQIPNCGL. 2 disulfide bridges follow: cysteine 152/cysteine 176 and cysteine 154/cysteine 194. N-linked (GlcNAc...) asparagine glycans are attached at residues asparagine 178, asparagine 205, asparagine 241, asparagine 254, asparagine 280, asparagine 325, asparagine 338, and asparagine 412. 2 Ig-like C2-type domains span residues 197 to 282 and 295 to 365; these read PSAN…VNLT and PTSD…IAKN. Cysteine 218 and cysteine 266 are oxidised to a cystine. Cysteine 302 and cysteine 345 form a disulfide bridge. The chain crosses the membrane as a helical span at residues 431–454; that stretch reads LSVYAVVVIASVVGFCLLVMLFLL. The tract at residues 455-466 is interaction with MAPK8IP3/JIP3; the sequence is KLARHSKFGMKG. Residues 455–822 lie on the Cytoplasmic side of the membrane; the sequence is KLARHSKFGM…ASPVYLDILG (368 aa). The segment at 475–498 is disordered; that stretch reads DDSASPLHHISNGSNTPSSSEGGP. A compositionally biased stretch (polar residues) spans 485-495; sequence SNGSNTPSSSE. Position 516 is a phosphotyrosine; by autocatalysis (tyrosine 516). The 270-residue stretch at 538-807 folds into the Protein kinase domain; that stretch reads IVLKRELGEG…KNIKGIHTLL (270 aa). Residues 544–552 and lysine 572 each bind ATP; that span reads LGEGAFGKV. The Proton acceptor role is filled by aspartate 676. 4 positions are modified to phosphotyrosine; by autocatalysis: tyrosine 702, tyrosine 706, tyrosine 707, and tyrosine 817.

It belongs to the protein kinase superfamily. Tyr protein kinase family. Insulin receptor subfamily. Exists in a dynamic equilibrium between monomeric (low affinity) and dimeric (high affinity) structures. Interacts (phosphorylated upon activation by BDNF) with SHC1; mediates SHC1 phosphorylation and activation. Interacts (phosphorylated upon activation by BDNF) with PLCG1 and/or PLCG2; mediates PLCG1 phosphorylation and activation. Interacts with SH2B1 and SH2B2. Interacts with NGFR; may regulate the ligand specificity of the receptor. Interacts with SORCS2; this interaction is important for normal targeting to post-synaptic densities in response to high-frequency stimulation. Interacts (phosphorylated upon ligand-binding) with SH2D1A; regulates NTRK2. Interacts with SQSTM1 and KIDINS220. Interacts (phosphorylated upon ligand-binding) with FRS2; activates the MAPK signaling pathway. Interacts with APPL1. Interacts with MAPK8IP3/JIP3 and KLC1; interaction with KLC1 is mediated by MAPK8IP3/JIP3. Interacts with SORL1; this interaction facilitates NTRK2 trafficking between synaptic plasma membranes, postsynaptic densities and cell soma, hence positively regulates BDNF signaling. Interacts with SLITRK2. In terms of processing, phosphorylated. Undergoes ligand-mediated autophosphorylation that is required for interaction with SHC1 and PLCG1 and other downstream effectors. Isoform TrkB-T-Shc is not phosphorylated. Ubiquitinated. Undergoes polyubiquitination upon activation; regulated by NGFR. Ubiquitination regulates the internalization of the receptor. In terms of tissue distribution, isoform TrkB is expressed in the central and peripheral nervous system. In the central nervous system (CNS), expression is observed in the cerebral cortex, hippocampus, thalamus, choroid plexus, granular layer of the cerebellum, brain stem, and spinal cord. In the peripheral nervous system, it is expressed in many cranial ganglia, the ophthalmic nerve, the vestibular system, multiple facial structures, the submaxillary glands, and dorsal root ganglia. Isoform TrkB-T1 is mainly expressed in the brain but also detected in other tissues including pancreas, kidney and heart. Isoform TrkB-T-Shc is predominantly expressed in the brain.

The protein localises to the cell membrane. Its subcellular location is the endosome membrane. It is found in the early endosome membrane. The protein resides in the cell projection. It localises to the axon. The protein localises to the dendrite. Its subcellular location is the cytoplasm. It is found in the perinuclear region. The protein resides in the postsynaptic density. The enzyme catalyses L-tyrosyl-[protein] + ATP = O-phospho-L-tyrosyl-[protein] + ADP + H(+). The neuronal activity and the influx of calcium positively regulate the kinase activity and the internalization of the receptor which are both important for active signaling. Regulated by NGFR that may control the internalization of the receptor. NGFR may also stimulate the activation by BDNF compared to NTF3 and NTF4. SH2D1A inhibits the autophosphorylation of the receptor, and alters the recruitment and activation of downstream effectors and signaling cascades. The formation of active receptors dimers able to fully transduce the ligand-mediated signal, may be negatively regulated by the formation of inactive heterodimers with the non-catalytic isoforms. Its function is as follows. Receptor tyrosine kinase involved in the development and the maturation of the central and the peripheral nervous systems through regulation of neuron survival, proliferation, migration, differentiation, and synapse formation and plasticity. Receptor for BDNF/brain-derived neurotrophic factor and NTF4/neurotrophin-4. Alternatively can also bind NTF3/neurotrophin-3 which is less efficient in activating the receptor but regulates neuron survival through NTRK2. Upon ligand-binding, undergoes homodimerization, autophosphorylation and activation. Recruits, phosphorylates and/or activates several downstream effectors including SHC1, FRS2, SH2B1, SH2B2 and PLCG1 that regulate distinct overlapping signaling cascades. Through SHC1, FRS2, SH2B1, SH2B2 activates the GRB2-Ras-MAPK cascade that regulates for instance neuronal differentiation including neurite outgrowth. Through the same effectors controls the Ras-PI3 kinase-AKT1 signaling cascade that mainly regulates growth and survival. Through PLCG1 and the downstream protein kinase C-regulated pathways controls synaptic plasticity. Thereby, plays a role in learning and memory by regulating both short term synaptic function and long-term potentiation. PLCG1 also leads to NF-Kappa-B activation and the transcription of genes involved in cell survival. Hence, it is able to suppress anoikis, the apoptosis resulting from loss of cell-matrix interactions. May also play a role in neutrophin-dependent calcium signaling in glial cells and mediate communication between neurons and glia. This chain is BDNF/NT-3 growth factors receptor (NTRK2), found in Homo sapiens (Human).